Reading from the N-terminus, the 878-residue chain is Phosphoenolpyruvate carboxylase (878 aa).

Active-site residues include His140 and Lys545.

This sequence belongs to the PEPCase type 1 family. Mg(2+) is required as a cofactor.

It catalyses the reaction oxaloacetate + phosphate = phosphoenolpyruvate + hydrogencarbonate. Functionally, forms oxaloacetate, a four-carbon dicarboxylic acid source for the tricarboxylic acid cycle. This is Phosphoenolpyruvate carboxylase from Pseudomonas syringae pv. tomato (strain ATCC BAA-871 / DC3000).